Here is a 685-residue protein sequence, read N- to C-terminus: Invasion protein InvA (685 aa).

Transmembrane regions (helical) follow at residues 17–37, 39–59, 61–81, 110–130, 197–217, 235–255, 274–294, and 295–315; these read ILVLMVMIISMFVIPLPTYLV, FLIALNIVLAILVFMGSFYID, ILSFSTFPAVLLITTLFRLAL, SLAVGFVVFSIVTVVQFIVIT, AIAGIIIIFVNFIGGISVGMT, IGDGLVAQIPALLIAISAGFI, LLNNPFVLVVTAILTISMGTL, and PGFPLPVFVILSVVLSVLFYF.

This sequence belongs to the FHIPEP (flagella/HR/invasion proteins export pore) family.

It is found in the cell inner membrane. Functionally, involved in the invasion of the cells of the intestinal epithelium. Could be involved in the translocation of the InvE protein. This chain is Invasion protein InvA (invA), found in Salmonella typhi.